Reading from the N-terminus, the 340-residue chain is Homeobox protein DBX2 (340 aa).

The segment at residues 185 to 244 (GILRRAVFSEDQRKALEKMFQKQKYISKTDRKKLAINLGLKESQVKIWFQNRRMKWRNSK) is a DNA-binding region (homeobox). The interval 283-313 (QQHPSPGWRENSPEPSERLIQGSPGAEALPP) is disordered.

It belongs to the H2.0 homeobox family.

Its subcellular location is the nucleus. The polypeptide is Homeobox protein DBX2 (DBX2) (Bos taurus (Bovine)).